The primary structure comprises 85 residues: UPF0386 protein RHECIAT_CH0001945 (85 aa).

Belongs to the UPF0386 family.

The chain is UPF0386 protein RHECIAT_CH0001945 from Rhizobium etli (strain CIAT 652).